Here is a 301-residue protein sequence, read N- to C-terminus: uncharacterized protein (301 aa).

Residues S44 and Y107 each act as charge relay system in the active site. Residue Y133 is the Proton donor of the active site. Residue K162 is the Schiff-base intermediate with substrate of the active site.

It belongs to the DapA family. As to quaternary structure, homotetramer.

It localises to the cytoplasm. This is an uncharacterized protein from Pyrobaculum arsenaticum (strain DSM 13514 / JCM 11321 / PZ6).